The sequence spans 603 residues: Variable flagella 3 (603 aa).

A coiled-coil region spans residues 169-289; it reads GGEVSAELRR…TEDLEARDRR (121 aa). Residues 288-297 are compositionally biased toward basic and acidic residues; that stretch reads RRMNSTDRIR. 2 disordered regions span residues 288–526 and 539–564; these read RRMN…PARA and AGRGGSLQGDDASSAHGEHMSQSSKS. Residues 337–348 are compositionally biased toward low complexity; that stretch reads SRSNSRGRGTSS. Residues 364 to 380 are compositionally biased toward basic and acidic residues; it reads PRFDPTEYVRQRKERES. Residues 397-406 show a composition bias toward polar residues; that stretch reads AGTSRASSVV. Gly residues predominate over residues 486-510; sequence GASGGGAGGWSKFPGGGGGGVGGSG. Polar residues predominate over residues 511–520; sequence QRISSNSPRS.

Belongs to the CCDC61 family.

The protein localises to the cytoplasm. Its subcellular location is the cytoskeleton. It localises to the flagellum basal body. Required for normal flagella and striated fiber formation. The sequence is that of Variable flagella 3 from Chlamydomonas reinhardtii (Chlamydomonas smithii).